The chain runs to 274 residues: 2,3,4,5-tetrahydropyridine-2,6-dicarboxylate N-succinyltransferase (274 aa).

R104 and D141 together coordinate substrate.

It belongs to the transferase hexapeptide repeat family. Homotrimer.

It is found in the cytoplasm. It catalyses the reaction (S)-2,3,4,5-tetrahydrodipicolinate + succinyl-CoA + H2O = (S)-2-succinylamino-6-oxoheptanedioate + CoA. It participates in amino-acid biosynthesis; L-lysine biosynthesis via DAP pathway; LL-2,6-diaminopimelate from (S)-tetrahydrodipicolinate (succinylase route): step 1/3. This chain is 2,3,4,5-tetrahydropyridine-2,6-dicarboxylate N-succinyltransferase (dapD), found in Escherichia coli O157:H7.